Here is a 65-residue protein sequence, read N- to C-terminus: uncharacterized protein (65 aa).

This is an uncharacterized protein from Treponema pallidum (strain Nichols).